The chain runs to 340 residues: MNTVLFSPYTTRGLTLKNRIVMSPMCMYSCDTKDGTVRTWHKIHYPARAIGQVGLIIVEATGVTPQGRISEHDLGIWDDDHIHGLHELVGLVKEHGAAIGIQLAHAGRKSEVPGEIIAPSAIPFNESSPTPKEMTKADIEKTVQAFQDGARRAKKAGFDVIEIHAAHGYLINEFLSPLSNRRQDEYGGSPENRYHFLGEVIDAVREVWDGPLFVRISASDYHPDGLTVKDYVPYVKRMKEQGVDLVDVSSGAVVPARIDVYPGYQVPFAEFIRREAGIPTGAVGLITSGWQAEEVLHNGRADLVFLGRELLRNPYWPYAAAKELGVKIEAPVQYERGWRF.

23 to 26 provides a ligand contact to FMN; it reads SPMC. Tyr28 provides a ligand contact to substrate. FMN contacts are provided by Ala60 and Gln102. 164-167 contacts substrate; it reads HAAH. FMN is bound by residues Arg215 and 307-308; that span reads GR.

Belongs to the NADH:flavin oxidoreductase/NADH oxidase family. NamA subfamily. Homotetramer. Requires FMN as cofactor.

It carries out the reaction A + NADPH + H(+) = AH2 + NADP(+). Catalyzes the reduction of the double bond of an array of alpha,beta-unsaturated aldehydes and ketones. It also reduces the nitro group of nitroester and nitroaromatic compounds. It could have a role in detoxification processes. The sequence is that of NADPH dehydrogenase from Geobacillus thermodenitrificans (strain NG80-2).